We begin with the raw amino-acid sequence, 374 residues long: tRNA-specific 2-thiouridylase MnmA (374 aa).

ATP-binding positions include 17 to 24 (GMSGGVDS) and Met-43. An interaction with target base in tRNA region spans residues 103–105 (NPD). Catalysis depends on Cys-108, which acts as the Nucleophile. A disulfide bond links Cys-108 and Cys-204. Gly-132 is an ATP binding site. Residues 154–156 (KDQ) form an interaction with tRNA region. Residue Cys-204 is the Cysteine persulfide intermediate of the active site. Residues 316–317 (RY) are interaction with tRNA.

Belongs to the MnmA/TRMU family.

It localises to the cytoplasm. The catalysed reaction is S-sulfanyl-L-cysteinyl-[protein] + uridine(34) in tRNA + AH2 + ATP = 2-thiouridine(34) in tRNA + L-cysteinyl-[protein] + A + AMP + diphosphate + H(+). In terms of biological role, catalyzes the 2-thiolation of uridine at the wobble position (U34) of tRNA, leading to the formation of s(2)U34. The chain is tRNA-specific 2-thiouridylase MnmA from Pseudomonas putida (strain GB-1).